We begin with the raw amino-acid sequence, 1178 residues long: Pyruvate carboxylase 1 (1178 aa).

Positions 18–470 (EKNKILVANR…WTTFIDDTPQ (453 aa)) constitute a Biotin carboxylation domain. Lys-136, Glu-220, and His-255 together coordinate ATP. One can recognise an ATP-grasp domain in the interval 140–337 (RNLAAKANVP…IVAAQIQIAA (198 aa)). Arg-312 is an active-site residue. Positions 557–824 (TLLMDTTWRD…DTGINVEHVR (268 aa)) constitute a Pyruvate carboxyltransferase domain. Residues 565 to 569 (RDAHQ) and Arg-638 each bind substrate. Residue Asp-566 participates in a divalent metal cation binding. Residues Lys-734, His-764, and His-766 each contribute to the a divalent metal cation site. Lys-734 carries the post-translational modification N6-carboxylysine. A substrate-binding site is contributed by Thr-898. One can recognise a Biotinyl-binding domain in the interval 1094–1169 (KADMHDPLHI…DSSDLLVLLE (76 aa)). N6-biotinyllysine is present on Lys-1135.

Homotetramer. Requires biotin as cofactor. The cofactor is Zn(2+).

The protein localises to the cytoplasm. The catalysed reaction is hydrogencarbonate + pyruvate + ATP = oxaloacetate + ADP + phosphate + H(+). The protein operates within carbohydrate biosynthesis; gluconeogenesis. In terms of biological role, pyruvate carboxylase catalyzes a 2-step reaction, involving the ATP-dependent carboxylation of the covalently attached biotin in the first step and the transfer of the carboxyl group to pyruvate in the second. In Saccharomyces cerevisiae (strain ATCC 204508 / S288c) (Baker's yeast), this protein is Pyruvate carboxylase 1 (PYC1).